Reading from the N-terminus, the 911-residue chain is SH3 and PX domain-containing protein 2B (911 aa).

The PX domain maps to 5-129 (RSIVEVKVLD…QFFETRPEDL (125 aa)). A Phosphotyrosine modification is found at Y25. SH3 domains are found at residues 152–211 (MVLE…GQDG) and 221–280 (EEEE…KNSG). Residues 275 to 366 (LKKNSGEPLP…GLNLPKPPIP (92 aa)) are disordered. Residues S279 and S291 each carry the phosphoserine modification. The segment covering 282–292 (PLPPKPGPGSP) has biased composition (pro residues). Basic and acidic residues predominate over residues 311-337 (GREKELLSSQRDGRFEGRPVPDGDAKQ). The span at 338 to 347 (RSPKMRQRPP) shows a compositional bias: basic residues. The SH3 3 domain maps to 368–427 (QVEEEYYTIAEFQTTIPDGISFQAGLKVEVIEKNLSGWWYIQIEDKEGWAPATFIDKYKK). A disordered region spans residues 458 to 834 (NTGSEATGPS…GPWGTGKIGE (377 aa)). 5 stretches are compositionally biased toward basic and acidic residues: residues 486–499 (KDWKGSKDVLRKAS), 517–548 (EEKPSLPPRKESIIKSEGELLERERERQRTEQ), 571–586 (PARDSRRPEPKPDKSR), 598–609 (CGHKVLAKEVKK), and 618–628 (SKTDLPEEKPD). S499 and S528 each carry phosphoserine. Composition is skewed to pro residues over residues 643-653 (RPKPAPSPKTE) and 756-766 (VVPPRRPPPPK). The span at 822 to 831 (GSLGPWGTGK) shows a compositional bias: gly residues. S843 carries the phosphoserine modification. Residues 850–911 (LKDSLYVAVA…IPSNYLRKKP (62 aa)) enclose the SH3 4 domain.

Belongs to the SH3PXD2 family. In terms of assembly, interacts with ADAM15. Interacts with NOXO1. Interacts (via SH3 domains) with NOXA1; the interaction is direct. Interacts with FASLG. Phosphorylated in SRC-transformed cells. Expressed in fibroblasts.

The protein localises to the cytoplasm. It is found in the cell projection. Its subcellular location is the podosome. Adapter protein involved in invadopodia and podosome formation and extracellular matrix degradation. Binds matrix metalloproteinases (ADAMs), NADPH oxidases (NOXs) and phosphoinositides. Acts as an organizer protein that allows NOX1- or NOX3-dependent reactive oxygen species (ROS) generation and ROS localization. Plays a role in mitotic clonal expansion during the immediate early stage of adipocyte differentiation. The protein is SH3 and PX domain-containing protein 2B (SH3PXD2B) of Homo sapiens (Human).